The primary structure comprises 86 residues: ATP synthase subunit c (86 aa).

Helical transmembrane passes span 8-28 (VLAA…GAGI) and 66-86 (GIYA…IGML).

It belongs to the ATPase C chain family. F-type ATPases have 2 components, F(1) - the catalytic core - and F(0) - the membrane proton channel. F(1) has five subunits: alpha(3), beta(3), gamma(1), delta(1), epsilon(1). F(0) has three main subunits: a(1), b(2) and c(10-14). The alpha and beta chains form an alternating ring which encloses part of the gamma chain. F(1) is attached to F(0) by a central stalk formed by the gamma and epsilon chains, while a peripheral stalk is formed by the delta and b chains.

The protein resides in the cell membrane. In terms of biological role, f(1)F(0) ATP synthase produces ATP from ADP in the presence of a proton or sodium gradient. F-type ATPases consist of two structural domains, F(1) containing the extramembraneous catalytic core and F(0) containing the membrane proton channel, linked together by a central stalk and a peripheral stalk. During catalysis, ATP synthesis in the catalytic domain of F(1) is coupled via a rotary mechanism of the central stalk subunits to proton translocation. Key component of the F(0) channel; it plays a direct role in translocation across the membrane. A homomeric c-ring of between 10-14 subunits forms the central stalk rotor element with the F(1) delta and epsilon subunits. The chain is ATP synthase subunit c from Natranaerobius thermophilus (strain ATCC BAA-1301 / DSM 18059 / JW/NM-WN-LF).